The following is a 350-amino-acid chain: Nicotinate-nucleotide--dimethylbenzimidazole phosphoribosyltransferase (350 aa).

Glu316 serves as the catalytic Proton acceptor.

It belongs to the CobT family.

The enzyme catalyses 5,6-dimethylbenzimidazole + nicotinate beta-D-ribonucleotide = alpha-ribazole 5'-phosphate + nicotinate + H(+). It functions in the pathway nucleoside biosynthesis; alpha-ribazole biosynthesis; alpha-ribazole from 5,6-dimethylbenzimidazole: step 1/2. Its function is as follows. Catalyzes the synthesis of alpha-ribazole-5'-phosphate from nicotinate mononucleotide (NAMN) and 5,6-dimethylbenzimidazole (DMB). This is Nicotinate-nucleotide--dimethylbenzimidazole phosphoribosyltransferase from Pseudomonas syringae pv. syringae (strain B728a).